The primary structure comprises 257 residues: Thioesterase frbE (257 aa).

It belongs to the AMT4 thioesterase family.

The protein operates within antifungal biosynthesis. In terms of biological role, thioesterase; part of the gene cluster that mediates the biosynthesis of the antifungal antibiotic FR901469, an inhibitor of beta-1,3-glucansynthase, exerting antifungal activity against the pathogenes Candida albicans and Aspergillus fumigatus. FR901469 is a cyclic depsipeptide containing 12 amino acid residues and a fatty acid chain. The NRPS frbI contains 12 modules responsible for the formation of the depsipeptide backbone which is denoted as Acyl-Thr-Ala-Tyr-Val-4OHPro-Thr-Thr-3OHPro-threo3OHGln-Gly-Thr-Orn-OH (C71H116N14O23). The PKS frbB is probably involved in the production of the hydrocarbon chain, and the acyl-CoA ligase frbC might be involved in the transport of the chain to the peptide ptoduct of frbI. Because FR901469 contains 3 hydroxylated amino acid residues, the 3 oxygenases frbA, frbH, and frbJ might be participating in amino acid hydroxylation. As no thioesterase domains were detected in frbI or frbB, the thioesterases frbD and frbE may instead release and cyclize the products of the NRPS and PKS, respectively. This is Thioesterase frbE from Dothideomycetidae sp. (strain 11243) (Fungal sp. (strain No.11243)).